A 312-amino-acid polypeptide reads, in one-letter code: Ribonuclease HIII (312 aa).

The region spanning 95–311 (FNCIGSDEAG…REKAQKILKP (217 aa)) is the RNase H type-2 domain. A divalent metal cation-binding residues include Asp101, Glu102, and Asp206.

Belongs to the RNase HII family. RnhC subfamily. The cofactor is Mn(2+). Requires Mg(2+) as cofactor.

Its subcellular location is the cytoplasm. It carries out the reaction Endonucleolytic cleavage to 5'-phosphomonoester.. Its function is as follows. Endonuclease that specifically degrades the RNA of RNA-DNA hybrids. The sequence is that of Ribonuclease HIII from Staphylococcus aureus (strain MSSA476).